A 208-amino-acid polypeptide reads, in one-letter code: MEWSPVAKVYDPLKAGSIDGTDVEPHDAGVWRAMLARYKPNRGVCGDPDLTLFVARLNPQTTEEKLRDVFSKFGDIRRLRLVRDVVTGFSKRYAFIEYKEERSLKRAWRDANKLILDQYELLVDVEQERTLPGWRPRRLGGGQGGQKESGQLRFGGRDRPFRKPINLSTRRPAEPRGRETERERDRRDYRDRRHERTHTEDRTHRHTY.

One can recognise an RRM domain in the interval 50–128 (LTLFVARLNP…YELLVDVEQE (79 aa)). Positions 133-208 (GWRPRRLGGG…TEDRTHRHTY (76 aa)) are disordered. Positions 171-208 (RPAEPRGRETERERDRRDYRDRRHERTHTEDRTHRHTY) are enriched in basic and acidic residues.

Its subcellular location is the nucleus. The polypeptide is U11/U12 small nuclear ribonucleoprotein 35 kDa protein (snrnp35) (Danio rerio (Zebrafish)).